Here is a 443-residue protein sequence, read N- to C-terminus: Putative rhamnogalacturonase D (443 aa).

The signal sequence occupies residues 1–16 (MLVTSLIALLPAIAAA). An intrachain disulfide couples cysteine 37 to cysteine 63. 4 N-linked (GlcNAc...) asparagine glycosylation sites follow: asparagine 47, asparagine 103, asparagine 124, and asparagine 152. Aspartate 215 serves as the catalytic Proton donor. Cysteine 217 and cysteine 234 are disulfide-bonded. N-linked (GlcNAc...) asparagine glycans are attached at residues asparagine 235, asparagine 250, asparagine 263, asparagine 276, and asparagine 281. An intrachain disulfide couples cysteine 338 to cysteine 344. Asparagine 346 is a glycosylation site (N-linked (GlcNAc...) asparagine). An intrachain disulfide couples cysteine 366 to cysteine 375. N-linked (GlcNAc...) asparagine glycosylation occurs at asparagine 380.

This sequence belongs to the glycosyl hydrolase 28 family.

It is found in the secreted. Its function is as follows. Pectinolytic enzymes consist of four classes of enzymes: pectine lyase, polygalacturonase, pectin methylesterase and rhamnogalacturonase. Hydrolyzes alpha-D-galacturonopyranosyl-(1,2)-alpha-L-rhamnopyranosyl linkages in the backbone of the hairy regions of pectins. This is Putative rhamnogalacturonase D (rhgD) from Aspergillus niger (strain ATCC MYA-4892 / CBS 513.88 / FGSC A1513).